A 325-amino-acid polypeptide reads, in one-letter code: Serine/threonine-protein kinase CtkA (325 aa).

Residues 21-24 (NGNK), lysine 37, glutamine 72, and 88-90 (KDF) each bind ATP. Residues asparagine 160 and aspartate 179 each contribute to the Mg(2+) site. Position 179 (aspartate 179) interacts with ATP. The segment at 296-325 (QHKQAHSNPYDNADDLDNSNEYTPTPKRRR) is disordered.

Autophosphorylates on either Thr-3 or Thr-7.

Its subcellular location is the secreted. The protein localises to the host cytoplasm. The protein resides in the host cytosol. It is found in the host nucleus. It carries out the reaction L-seryl-[protein] + ATP = O-phospho-L-seryl-[protein] + ADP + H(+). The enzyme catalyses L-threonyl-[protein] + ATP = O-phospho-L-threonyl-[protein] + ADP + H(+). Virulence factor acting as a pro-inflammatory protein that induces the secretion of the pro-inflammatory cytokines TNF-alpha (tumor necrosis factor-alpha) and IL-8 (interleukin-8) from human macrophages, as well as enhanced translocation of the transcription factor NF-kappa-B complex in macrophages. Is a kinase capable of autophosphorylating itself at a threonine residue near the N-terminus. Also leads to enhanced phosphorylation of the NF-kappa-B p65 subunit (RELA) at 'Ser-276' in human epithelial cancer cells; its kinase activity is required for this enhanced phosphorylation that up-regulates NF-kappa-B activity, but it does not directly phosphorylate this protein. Thus, the kinase activity of CtkA may play an important role in the induction of host inflammatory responses during H.pylori infection. This chain is Serine/threonine-protein kinase CtkA (ctkA), found in Helicobacter pylori (strain J99 / ATCC 700824) (Campylobacter pylori J99).